Here is a 210-residue protein sequence, read N- to C-terminus: MYKNVFVIDHPLIQHKISLIRDENTGSKEFRELVEEIAMLMAYEVTRDLPLEEIEVKTPVAVAKTKVIAGKKLGIIPILRAGLGMVDGMLKLIPAAKVGHIGIYRDPETLKPVEYYCKLPSDIAERDLIVVDPMLATGGSACAAIHFLKERGAQNIKLVNLIAAPEGIEAVHRDHPEVPIYVASIDQGLNEHGYIVPGLGDAGDRLFGTK.

5-phospho-alpha-D-ribose 1-diphosphate contacts are provided by residues Arg80, Arg105, and 132-140 (DPMLATGGS). Residues Ile195 and 200–202 (GDA) contribute to the uracil site. Asp201 is a binding site for 5-phospho-alpha-D-ribose 1-diphosphate.

The protein belongs to the UPRTase family. The cofactor is Mg(2+).

It carries out the reaction UMP + diphosphate = 5-phospho-alpha-D-ribose 1-diphosphate + uracil. It functions in the pathway pyrimidine metabolism; UMP biosynthesis via salvage pathway; UMP from uracil: step 1/1. With respect to regulation, allosterically activated by GTP. Functionally, catalyzes the conversion of uracil and 5-phospho-alpha-D-ribose 1-diphosphate (PRPP) to UMP and diphosphate. This chain is Uracil phosphoribosyltransferase, found in Thermoanaerobacter pseudethanolicus (strain ATCC 33223 / 39E) (Clostridium thermohydrosulfuricum).